The primary structure comprises 169 residues: Peptide deformylase 1 (169 aa).

Cys-93 and His-135 together coordinate Fe cation. Glu-136 is an active-site residue. Residue His-139 coordinates Fe cation.

The protein belongs to the polypeptide deformylase family. Requires Fe(2+) as cofactor.

It catalyses the reaction N-terminal N-formyl-L-methionyl-[peptide] + H2O = N-terminal L-methionyl-[peptide] + formate. In terms of biological role, removes the formyl group from the N-terminal Met of newly synthesized proteins. Requires at least a dipeptide for an efficient rate of reaction. N-terminal L-methionine is a prerequisite for activity but the enzyme has broad specificity at other positions. The polypeptide is Peptide deformylase 1 (Corynebacterium efficiens (strain DSM 44549 / YS-314 / AJ 12310 / JCM 11189 / NBRC 100395)).